Consider the following 508-residue polypeptide: Asparagine--tRNA ligase (508 aa).

It belongs to the class-II aminoacyl-tRNA synthetase family. Homodimer.

It localises to the cytoplasm. It carries out the reaction tRNA(Asn) + L-asparagine + ATP = L-asparaginyl-tRNA(Asn) + AMP + diphosphate + H(+). The protein is Asparagine--tRNA ligase of Streptococcus suis (strain 05ZYH33).